The primary structure comprises 428 residues: Dihydroorotase (428 aa).

Zn(2+)-binding residues include histidine 59 and histidine 61. Residues 61 to 63 (HLR) and asparagine 93 contribute to the substrate site. Aspartate 151, histidine 178, and histidine 231 together coordinate Zn(2+). Substrate is bound at residue asparagine 277. Residue aspartate 304 participates in Zn(2+) binding. Residue aspartate 304 is part of the active site. Residues histidine 308 and 322–323 (FG) contribute to the substrate site.

The protein belongs to the metallo-dependent hydrolases superfamily. DHOase family. Class I DHOase subfamily. Requires Zn(2+) as cofactor.

The catalysed reaction is (S)-dihydroorotate + H2O = N-carbamoyl-L-aspartate + H(+). It participates in pyrimidine metabolism; UMP biosynthesis via de novo pathway; (S)-dihydroorotate from bicarbonate: step 3/3. Catalyzes the reversible cyclization of carbamoyl aspartate to dihydroorotate. The polypeptide is Dihydroorotase (Bacillus cereus (strain ATCC 10987 / NRS 248)).